The primary structure comprises 387 residues: S-adenosylmethionine synthase (387 aa).

H19 lines the ATP pocket. D21 is a Mg(2+) binding site. E47 provides a ligand contact to K(+). Q103 is a binding site for L-methionine. A flexible loop region spans residues 103–113 (QSPDIAQGVEL). ATP is bound by residues 167-169 (DMK), 233-234 (RF), D242, 248-249 (RK), A265, and K269. D242 lines the L-methionine pocket. Residue K273 participates in L-methionine binding.

The protein belongs to the AdoMet synthase family. Homotetramer; dimer of dimers. Mg(2+) is required as a cofactor. Requires K(+) as cofactor.

The protein resides in the cytoplasm. The enzyme catalyses L-methionine + ATP + H2O = S-adenosyl-L-methionine + phosphate + diphosphate. The protein operates within amino-acid biosynthesis; S-adenosyl-L-methionine biosynthesis; S-adenosyl-L-methionine from L-methionine: step 1/1. In terms of biological role, catalyzes the formation of S-adenosylmethionine (AdoMet) from methionine and ATP. The overall synthetic reaction is composed of two sequential steps, AdoMet formation and the subsequent tripolyphosphate hydrolysis which occurs prior to release of AdoMet from the enzyme. The protein is S-adenosylmethionine synthase of Mycoplasma mycoides subsp. mycoides SC (strain CCUG 32753 / NCTC 10114 / PG1).